We begin with the raw amino-acid sequence, 433 residues long: Histidinol dehydrogenase 2 (433 aa).

Positions 130, 192, and 215 each coordinate NAD(+). Residues Ser238, Gln260, and His263 each coordinate substrate. Residues Gln260 and His263 each coordinate Zn(2+). Active-site proton acceptor residues include Glu328 and His329. Residues His329, Asp362, Glu416, and His421 each coordinate substrate. Position 362 (Asp362) interacts with Zn(2+). His421 serves as a coordination point for Zn(2+).

The protein belongs to the histidinol dehydrogenase family. Zn(2+) serves as cofactor.

It catalyses the reaction L-histidinol + 2 NAD(+) + H2O = L-histidine + 2 NADH + 3 H(+). The protein operates within amino-acid biosynthesis; L-histidine biosynthesis; L-histidine from 5-phospho-alpha-D-ribose 1-diphosphate: step 9/9. In terms of biological role, catalyzes the sequential NAD-dependent oxidations of L-histidinol to L-histidinaldehyde and then to L-histidine. This Nostoc sp. (strain PCC 7120 / SAG 25.82 / UTEX 2576) protein is Histidinol dehydrogenase 2 (hisD2).